Consider the following 483-residue polypeptide: MSKSKEKYSQLRSFIPEMRRVKHIYFVGIGGAGMGGIAEVLVNEGYRLSGSDIAENAVTERLKSLGVQIHIGHHADQVHGTDVVVVSTAIDAENPELVAAKELRIPVVQRAEMLAELMRYRHGVAVAGTHGKTTTTSLIASIYAQADRDPTFVIGGLLNSAGTNARLGNSRYLIAEADESDASFLHLQPMVSVVTNIEADHMDTYGGDFEKLKSTFIDFLHNLPFYGVAVMCIDDPVVRELLPKVGRKIVTYGFSEDADIQALNFVQQGYSSHFTLRRDGVEDIAVMVNLPGEHNVLNALASIAVATEDEIEDEAIVLALAQFEGIGRRFQQLGTFATSKGEVMLVDDYGHHPSEVAATIKAARLGWPDKRLVMIYQPHRYSRTRDLYDDFVEVLSQVDCLILLDVYSAGEAPVPGADSRALCRSIRQRGQLDPIFVAGTEQLLSLLPDVLQDGDLLLTQGAGNIGTLSKLIAQTNLGFEVVS.

An ATP-binding site is contributed by glycine 128–threonine 134.

Belongs to the MurCDEF family.

The protein localises to the cytoplasm. The enzyme catalyses UDP-N-acetyl-alpha-D-muramate + L-alanine + ATP = UDP-N-acetyl-alpha-D-muramoyl-L-alanine + ADP + phosphate + H(+). It participates in cell wall biogenesis; peptidoglycan biosynthesis. Functionally, cell wall formation. This chain is UDP-N-acetylmuramate--L-alanine ligase, found in Shewanella violacea (strain JCM 10179 / CIP 106290 / LMG 19151 / DSS12).